A 122-amino-acid chain; its full sequence is MEKAVNTNTEVKKATATLRYAMISPRKVRIVIDLIRNKPVQEALNILKFIPKRGARFVEKLLKSAIANAENNHNMNVDKLYIAEIYANGGPMLKRIRPRAQGRAFLIRKRTSHITVVLKERE.

It belongs to the universal ribosomal protein uL22 family. In terms of assembly, part of the 50S ribosomal subunit.

This protein binds specifically to 23S rRNA; its binding is stimulated by other ribosomal proteins, e.g. L4, L17, and L20. It is important during the early stages of 50S assembly. It makes multiple contacts with different domains of the 23S rRNA in the assembled 50S subunit and ribosome. Functionally, the globular domain of the protein is located near the polypeptide exit tunnel on the outside of the subunit, while an extended beta-hairpin is found that lines the wall of the exit tunnel in the center of the 70S ribosome. In Caldicellulosiruptor saccharolyticus (strain ATCC 43494 / DSM 8903 / Tp8T 6331), this protein is Large ribosomal subunit protein uL22.